The following is a 285-amino-acid chain: MMEAIKKKMQMLKLDKENALDRAEQAEAEQKQAEERSKQLEDELAAMQKKLKGTEDELDKYSEALKDAQEKLELAEKKAADAEAEVASLNRRIQLVEEELDRAQERLATALQKLEEAEKAADESERGMKVIENRALKDEEKMELQEIQLKEAKHIAEEADRKYEEVARKLVIIEGDLERTEERAELAESKCSELEEELKNVTNNLKSLEAQAEKYSQKEDKYEEEIKILTDKLKEAETRAEFAERSVAKLEKTIDDLEDELYAQKLKYKAISEELDHALNDMTSI.

The stretch at 1-285 forms a coiled coil; sequence MMEAIKKKMQ…DHALNDMTSI (285 aa). Met2 bears the N-acetylmethionine mark. Met2 bears the N-acetylalanine mark. The span at 16–41 shows a compositional bias: basic and acidic residues; that stretch reads KENALDRAEQAEAEQKQAEERSKQLE. The interval 16 to 44 is disordered; it reads KENALDRAEQAEAEQKQAEERSKQLEDEL. Thr54 bears the Phosphothreonine mark. 2 positions are modified to phosphoserine: Ser62 and Ser88. A Phosphothreonine modification is found at Thr109. Residues Glu125 and Leu177 each carry the N6-acetyllysine modification. Ser207 is subject to Phosphoserine. An N6-acetyllysine modification is found at Tyr215. The residue at position 216 (Ser216) is a Phosphoserine. Thr253 is subject to Phosphothreonine. The residue at position 262 (Tyr262) is a Phosphotyrosine. Ser272 carries the post-translational modification Phosphoserine. Thr283 bears the Phosphothreonine mark. Ser284 bears the Phosphoserine mark.

This sequence belongs to the tropomyosin family. As to quaternary structure, homodimer. Heterodimer of an alpha (TPM1, TPM3 or TPM4) and a beta (TPM2) chain. Interacts with TMOD1. Interacts with TNNT1.

It is found in the cytoplasm. Its subcellular location is the cytoskeleton. Binds to actin filaments in muscle and non-muscle cells. Plays a central role, in association with the troponin complex, in the calcium dependent regulation of vertebrate striated muscle contraction. Smooth muscle contraction is regulated by interaction with caldesmon. In non-muscle cells is implicated in stabilizing cytoskeleton actin filaments. The protein is Tropomyosin alpha-3 chain (TPM3) of Homo sapiens (Human).